A 417-amino-acid chain; its full sequence is Methylthioribose-1-phosphate isomerase (417 aa).

Asp-285 serves as the catalytic Proton donor.

This sequence belongs to the eIF-2B alpha/beta/delta subunits family. MtnA subfamily.

It localises to the cytoplasm. The protein localises to the nucleus. The catalysed reaction is 5-(methylsulfanyl)-alpha-D-ribose 1-phosphate = 5-(methylsulfanyl)-D-ribulose 1-phosphate. The protein operates within amino-acid biosynthesis; L-methionine biosynthesis via salvage pathway; L-methionine from S-methyl-5-thio-alpha-D-ribose 1-phosphate: step 1/6. Functionally, catalyzes the interconversion of methylthioribose-1-phosphate (MTR-1-P) into methylthioribulose-1-phosphate (MTRu-1-P). In Lachancea thermotolerans (strain ATCC 56472 / CBS 6340 / NRRL Y-8284) (Yeast), this protein is Methylthioribose-1-phosphate isomerase.